Here is a 447-residue protein sequence, read N- to C-terminus: UPF0210 protein LAF_0976 (447 aa).

This sequence belongs to the UPF0210 family. As to quaternary structure, homodimer.

In Limosilactobacillus fermentum (strain NBRC 3956 / LMG 18251) (Lactobacillus fermentum), this protein is UPF0210 protein LAF_0976.